Consider the following 382-residue polypeptide: SPRY domain-containing protein C285.10c (382 aa).

The chain crosses the membrane as a helical span at residues 21 to 41 (LAILFIFIALAAVIVLLICLL). The region spanning 79 to 284 (GFSLLDDMGK…LHVNLGQAGY (206 aa)) is the B30.2/SPRY domain. The disordered stretch occupies residues 304 to 382 (APPPSYSTSQ…MHSMPATDEV (79 aa)). Polar residues-rich tracts occupy residues 309 to 334 (YSTS…QGDT) and 361 to 372 (FSPSSSNNQAYQ).

The protein localises to the cytoplasm. It localises to the membrane. This is SPRY domain-containing protein C285.10c from Schizosaccharomyces pombe (strain 972 / ATCC 24843) (Fission yeast).